The sequence spans 126 residues: Histone H2B (126 aa).

A compositionally biased stretch (low complexity) spans 1–12; that stretch reads MPEPAKSAPAAK. The interval 1-35 is disordered; the sequence is MPEPAKSAPAAKKGSKKAVSKVQKKDGKKRRKSRK. Lys6 and Lys13 each carry N6-acetyllysine. Position 15 is a phosphoserine (Ser15). N6-acetyllysine is present on residues Lys16 and Lys21. O-linked (GlcNAc) serine glycosylation occurs at Ser113. Lys121 participates in a covalent cross-link: Glycyl lysine isopeptide (Lys-Gly) (interchain with G-Cter in ubiquitin).

The protein belongs to the histone H2B family. As to quaternary structure, the nucleosome is a histone octamer containing two molecules each of H2A, H2B, H3 and H4 assembled in one H3-H4 heterotetramer and two H2A-H2B heterodimers. The octamer wraps approximately 147 bp of DNA. Post-translationally, monoubiquitination of Lys-121 by BRE1 gives a specific tag for epigenetic transcriptional activation and is also prerequisite for histone H3 'Lys-4' and 'Lys-79' methylation. In terms of processing, phosphorylated on Ser-15 during apoptosis; which facilitates apoptotic chromatin condensation. GlcNAcylation at Ser-113 promotes monoubiquitination of Lys-121. It fluctuates in response to extracellular glucose, and associates with transcribed genes. Expressed by the skin granular glands.

It localises to the nucleus. The protein resides in the secreted. It is found in the chromosome. Its function is as follows. Core component of nucleosome. Nucleosomes wrap and compact DNA into chromatin, limiting DNA accessibility to the cellular machineries which require DNA as a template. Histones thereby play a central role in transcription regulation, DNA repair, DNA replication and chromosomal stability. DNA accessibility is regulated via a complex set of post-translational modifications of histones, also called histone code, and nucleosome remodeling. In terms of biological role, has antibacterial activity against the Gram-negative bacteria E.coli and the Gram-positive bacteria S.aureus. In Zhangixalus schlegelii (Japanese gliding frog), this protein is Histone H2B.